The sequence spans 500 residues: MDHTEGSPAEEPPAHAPSPGKFGERPPPKRLTREAMRNYLKERGDQTVLILHAKVAQKSYGNEKRFFCPPPCVYLMGSGWKKKKEQMERDGCSEQESQPCAFIGIGNSDQEMQQLNLEGKNYCTAKTLYISDSDKRKHFMLSVKMFYGNSDDIGVFLSKRIKVISKPSKKKQSLKNADLCIASGTKVALFNRLRSQTVSTRYLHVEGGNFHASSQQWGAFFIHLLDDDESEGEEFTVRDGYIHYGQTVKLVCSVTGMALPRLIIRKVDKQTALLDADDPVSQLHKCAFYLKDTERMYLCLSQERIIQFQATPCPKEPNKEMINDGASWTIISTDKAEYTFYEGMGPVLAPVTPVPVVESLQLNGGGDVAMLELTGQNFTPNLRVWFGDVEAETMYRCGESMLCVVPDISAFREGWRWVRQPVQVPVTLVRNDGIIYSTSLTFTYTPEPGPRPHCSAAGAILRANSSQVPPNESNTNSEGSYTNASTNSTSVTSSTATVVS.

Positions 1 to 30 (MDHTEGSPAEEPPAHAPSPGKFGERPPPKR) are disordered. DNA-binding stretches follow at residues 57 to 67 (QKSYGNEKRFF) and 165 to 170 (SKPSKK). N6-acetyllysine is present on Lys175. The interval 192-197 (RLRSQT) is DNA-binding. Positions 355-445 (PVVESLQLNG…YSTSLTFTYT (91 aa)) constitute an IPT/TIG domain. Over residues 465–481 (SSQVPPNESNTNSEGSY) the composition is skewed to polar residues. Positions 465-500 (SSQVPPNESNTNSEGSYTNASTNSTSVTSSTATVVS) are disordered. Positions 482–500 (TNASTNSTSVTSSTATVVS) are enriched in low complexity.

It belongs to the Su(H) family. In terms of assembly, interacts with activated NOTCH1, NOTCH2 or NOTCH3. Interacts with MINT/SHARP. This interaction may mediate the recruitment of large corepressor complexes containing proteins such as HDAC1, HDAC2, NCOR2, SAP30, FHL1/KYOT2 and CIR1. Interacts with EP300, MAML1 and PTF1A. Interacts with RITA1/C12orf52, leading to nuclear export, prevent the interaction between RBPJ and NICD product and subsequent down-regulation of the Notch signaling pathway. Interacts with SNW1. Interacts with CHCHD2 and CXXC5. Interacts with BEND6 (via BEN domain). Interacts with NKAPL. Interacts with ZMIZ1. Interacts with RBM15. Interacts with L3MBTL3 and KDM1A; the interaction with KDM1A is weaker in the absence of L3MBTL3 and the interaction with L3MBTL3 is impaired by Notch-derived peptide containing the intracellular domain (NICD). (Microbial infection) Interacts with EBV EBNA2. Interacts with EBV EBNA3. Interacts with EBV EBNA4. Interacts with EBV EBNA6 (via N-terminus).

It is found in the nucleus. The protein localises to the cytoplasm. Functionally, transcriptional regulator that plays a central role in Notch signaling, a signaling pathway involved in cell-cell communication that regulates a broad spectrum of cell-fate determinations. Acts as a transcriptional repressor when it is not associated with Notch proteins. When associated with some NICD product of Notch proteins (Notch intracellular domain), it acts as a transcriptional activator that activates transcription of Notch target genes. Probably represses or activates transcription via the recruitment of chromatin remodeling complexes containing histone deacetylase or histone acetylase proteins, respectively. Specifically binds to the immunoglobulin kappa-type J segment recombination signal sequence. Binds specifically to methylated DNA. Binds to the oxygen responsive element of COX4I2 and activates its transcription under hypoxia conditions (4% oxygen). Negatively regulates the phagocyte oxidative burst in response to bacterial infection by repressing transcription of NADPH oxidase subunits. The protein is Recombining binding protein suppressor of hairless of Homo sapiens (Human).